The sequence spans 488 residues: Zinc metalloproteinase-disintegrin VMP-II (488 aa).

A signal peptide spans 1 to 20 (MIQVLLVTICLAVFPYQGSS). The propeptide occupies 21–191 (IILESGNVND…KASQSNIPPE (171 aa)). One can recognise a Peptidase M12B domain in the interval 198-396 (RYIELVVVAD…STTRCLHNEP (199 aa)). Ca(2+)-binding residues include glutamate 201 and aspartate 285. The N-linked (GlcNAc...) asparagine glycan is linked to asparagine 296. Cystine bridges form between cysteine 309/cysteine 391, cysteine 349/cysteine 373, and cysteine 351/cysteine 356. Histidine 334 contacts Zn(2+). Glutamate 335 is a catalytic residue. Residues histidine 338 and histidine 344 each contribute to the Zn(2+) site. Residues cysteine 391, asparagine 394, asparagine 409, glutamate 413, glutamate 416, and aspartate 419 each contribute to the Ca(2+) site. The Disintegrin domain occupies 404–488 (PPFCGNYFKE…ADCPRNGLYG (85 aa)). 7 disulfide bridges follow: cysteine 407/cysteine 426, cysteine 418/cysteine 436, cysteine 420/cysteine 431, cysteine 430/cysteine 453, cysteine 444/cysteine 450, cysteine 449/cysteine 474, and cysteine 462/cysteine 481. Positions 466–468 (RGD) match the Cell attachment site motif.

Belongs to the venom metalloproteinase (M12B) family. P-II subfamily. P-IIb sub-subfamily. In terms of assembly, homodimer; disulfide-linked (disintegrin). Zn(2+) is required as a cofactor. Expressed by the venom gland.

The protein localises to the secreted. In terms of biological role, zinc metalloproteinase-disintegrin VMP-II: inhibits ADP-induced platelet aggregation (probably by binding integrin alpha-IIb/beta-3 (ITGA2B/ITGB3)) and degrades fibrinogen. Recombinant disintegrin r-Cam-dis (413-488): this recombinant protein inhibits platelet adhesion to fibrinogen (IC(50) is 1 nM), inhibits collagen- (IC(50) is 18 nM) and ADP-induced (IC(50) is 6 nM) platelet aggregation, and also inhibits platelet function on clot retraction. May act by binding integrin alpha-IIb/beta-3 (ITGA2B/ITGB3). The sequence is that of Zinc metalloproteinase-disintegrin VMP-II from Crotalus adamanteus (Eastern diamondback rattlesnake).